The chain runs to 68 residues: MNDFVGPIVTVLTAIIGVAILAVLVSRNSNTAGVIKAGSGGFSSMLGTALSPVTGGTGFAMTNNYSGF.

The next 2 helical transmembrane spans lie at 4–24 and 41–61; these read FVGPIVTVLTAIIGVAILAVL and GFSSMLGTALSPVTGGTGFAM.

It is found in the virion membrane. This Acinetobacter calcoaceticus (Arthrobacter siderocapsulatus) protein is Protein P34 (XXXIV).